The primary structure comprises 69 residues: Protein hunchback (69 aa).

C2H2-type zinc fingers lie at residues 1 to 11, 17 to 39, and 45 to 69; these read KHHLEYHLRNH, FKCEKCSYSCVNKSMLNSHLKSH, and YRCANCTYATKYCHSLKLHLRKYSH.

It belongs to the hunchback C2H2-type zinc-finger protein family.

It is found in the nucleus. Its function is as follows. Gap class segmentation protein that controls development of head structures. The polypeptide is Protein hunchback (hb) (Apis mellifera (Honeybee)).